The following is a 195-amino-acid chain: Protein SYM1 (195 aa).

A run of 4 helical transmembrane segments spans residues 17–39, 59–78, 99–121, and 168–190; these read LITN…QFFF, RAII…WYKF, STLL…PLYY, and PVQF…LSYV.

Belongs to the peroxisomal membrane protein PXMP2/4 family.

The protein localises to the mitochondrion inner membrane. Its function is as follows. May be involved in cellular response to stress. Required to maintain mitochondrial DNA (mtDNA) integrity and stability. This is Protein SYM1 (SYM1) from Candida albicans (strain SC5314 / ATCC MYA-2876) (Yeast).